The following is a 153-amino-acid chain: Virion assembly protein OPG100 (153 aa).

This sequence belongs to the orthopoxvirus OPG100 family. In terms of assembly, homodimer. Part of a complex composed of the kinase OPG054, OPG092, OPG114, OPG115, OPG142 and OPG157. Interacts with OPG175.

The protein resides in the virion. The protein localises to the host cytoplasm. Its function is as follows. Late protein which is a part of a large complex required for early virion morphogenesis. This complex participates in the formation of virosomes and the incorporation of virosomal contents into nascent immature virions. Plays a role in DNA packaging during immature virions (IV) formation. The chain is Virion assembly protein OPG100 (OPG100) from Vaccinia virus (strain Copenhagen) (VACV).